We begin with the raw amino-acid sequence, 197 residues long: Cold-regulated 413 plasma membrane protein 1 (197 aa).

Over 1 to 40 (MPMKSLRNDHGTLKAMIGSDFNELTIAAKNLATHAFTLTG) the chain is Extracellular. The chain crosses the membrane as a helical span at residues 41-61 (LGFGTSVLEWVASIAAIYLLV). Residues 62 to 71 (LDRTNWKTNM) are Cytoplasmic-facing. A helical transmembrane segment spans residues 72-92 (LTSLLIPYIFFSLPSLIFGIF). Residues 93 to 94 (RG) lie on the Extracellular side of the membrane. A helical transmembrane segment spans residues 95 to 115 (EIGKWIAFVAVVVQLFFPKHA). Residues 116 to 117 (RE) are Cytoplasmic-facing. A helical transmembrane segment spans residues 118–138 (YLELPVALVLLAVVAPNLIAG). Residues 139-141 (TFR) are Extracellular-facing. The helical transmembrane segment at 142-162 (DSWIGLAICLGIGCYLLQEHI) threads the bilayer. At 163 to 176 (RASGGFRNAFTKAN) the chain is on the cytoplasmic side. The helical transmembrane segment at 177 to 197 (GISNTVGIICLVVFPVWALIF) threads the bilayer.

Belongs to the Cold-regulated 413 protein family.

It localises to the membrane. The polypeptide is Cold-regulated 413 plasma membrane protein 1 (COR413PM1) (Arabidopsis thaliana (Mouse-ear cress)).